The following is a 230-amino-acid chain: Ephrin-A3 (230 aa).

The first 22 residues, 1 to 22 (MAAAPLLLLLLLVPVPLLPLLA), serve as a signal peptide directing secretion. One can recognise an Ephrin RBD domain in the interval 30–161 (GNRHAVYWNS…RMKVFVCCAS (132 aa)). N-linked (GlcNAc...) asparagine glycosylation is found at N38, N67, N84, and N92. Cystine bridges form between C63-C102 and C91-C150. G206 carries GPI-anchor amidated glycine lipidation. A propeptide spans 207–230 (TSPKREHLPLAVGIAFFLMTLLAS) (removed in mature form).

This sequence belongs to the ephrin family. In terms of assembly, interacts with EPHA8; activates EPHA8. As to expression, expressed in myogenic progenitor cells.

Its subcellular location is the cell membrane. Cell surface GPI-bound ligand for Eph receptors, a family of receptor tyrosine kinases which are crucial for migration, repulsion and adhesion during neuronal, vascular and epithelial development. Binds promiscuously Eph receptors residing on adjacent cells, leading to contact-dependent bidirectional signaling into neighboring cells. The signaling pathway downstream of the receptor is referred to as forward signaling while the signaling pathway downstream of the ephrin ligand is referred to as reverse signaling. The sequence is that of Ephrin-A3 (Efna3) from Mus musculus (Mouse).